The primary structure comprises 401 residues: S-adenosylmethionine synthase (401 aa).

ATP is bound at residue 136–141 (GQGSVD).

It belongs to the AdoMet synthase 2 family. Mg(2+) is required as a cofactor.

It catalyses the reaction L-methionine + ATP + H2O = S-adenosyl-L-methionine + phosphate + diphosphate. Its pathway is amino-acid biosynthesis; S-adenosyl-L-methionine biosynthesis; S-adenosyl-L-methionine from L-methionine: step 1/1. In terms of biological role, catalyzes the formation of S-adenosylmethionine from methionine and ATP. In Pyrococcus furiosus (strain ATCC 43587 / DSM 3638 / JCM 8422 / Vc1), this protein is S-adenosylmethionine synthase.